We begin with the raw amino-acid sequence, 206 residues long: ATP-dependent Clp protease proteolytic subunit (206 aa).

Ser110 serves as the catalytic Nucleophile. His135 is a catalytic residue.

This sequence belongs to the peptidase S14 family. In terms of assembly, fourteen ClpP subunits assemble into 2 heptameric rings which stack back to back to give a disk-like structure with a central cavity, resembling the structure of eukaryotic proteasomes.

The protein resides in the cytoplasm. It carries out the reaction Hydrolysis of proteins to small peptides in the presence of ATP and magnesium. alpha-casein is the usual test substrate. In the absence of ATP, only oligopeptides shorter than five residues are hydrolyzed (such as succinyl-Leu-Tyr-|-NHMec, and Leu-Tyr-Leu-|-Tyr-Trp, in which cleavage of the -Tyr-|-Leu- and -Tyr-|-Trp bonds also occurs).. Its function is as follows. Cleaves peptides in various proteins in a process that requires ATP hydrolysis. Has a chymotrypsin-like activity. Plays a major role in the degradation of misfolded proteins. This is ATP-dependent Clp protease proteolytic subunit from Edwardsiella ictaluri (strain 93-146).